Here is an 806-residue protein sequence, read N- to C-terminus: Leucine--tRNA ligase (806 aa).

Positions 54 to 64 (SYPSGDLHMGH) match the 'HIGH' region motif. The short motif at 571–575 (KMSKS) is the 'KMSKS' region element. ATP is bound at residue lysine 574.

This sequence belongs to the class-I aminoacyl-tRNA synthetase family.

It is found in the cytoplasm. It carries out the reaction tRNA(Leu) + L-leucine + ATP = L-leucyl-tRNA(Leu) + AMP + diphosphate. This is Leucine--tRNA ligase from Tropheryma whipplei (strain TW08/27) (Whipple's bacillus).